A 523-amino-acid polypeptide reads, in one-letter code: Sensory neuron membrane protein 1 (523 aa).

The Cytoplasmic portion of the chain corresponds to 1–11 (MQLPRELKYAA). A helical membrane pass occupies residues 12–32 (IAGGVALFGLIFGWVLFPTIL). Residues 33–458 (KSQLKKEMAL…HQLFIPKRVV (426 aa)) are Extracellular-facing. Residues Asn67 and Asn229 are each glycosylated (N-linked (GlcNAc...) asparagine). Disulfide bonds link Cys268–Cys333, Cys297–Cys352, and Cys335–Cys341. A glycan (N-linked (GlcNAc...) asparagine) is linked at Asn440. The helical transmembrane segment at 459–479 (GVLRWWMVSFGSLGAVIGIVF) threads the bilayer. The Cytoplasmic portion of the chain corresponds to 480 to 523 (HFRDHIMRLAVSGDTKVSKVTPEEEEQKDISVIGQAQEPAKVNI).

The protein belongs to the CD36 family.

The protein resides in the cell membrane. Its function is as follows. Plays an olfactory role that is not restricted to pheromone sensitivity. The chain is Sensory neuron membrane protein 1 from Helicoverpa armigera (Cotton bollworm).